A 72-amino-acid chain; its full sequence is NAD(P)H-quinone oxidoreductase subunit O (72 aa).

This sequence belongs to the complex I NdhO subunit family. NDH-1 can be composed of about 15 different subunits; different subcomplexes with different compositions have been identified which probably have different functions.

The protein localises to the cellular thylakoid membrane. It catalyses the reaction a plastoquinone + NADH + (n+1) H(+)(in) = a plastoquinol + NAD(+) + n H(+)(out). The catalysed reaction is a plastoquinone + NADPH + (n+1) H(+)(in) = a plastoquinol + NADP(+) + n H(+)(out). In terms of biological role, NDH-1 shuttles electrons from an unknown electron donor, via FMN and iron-sulfur (Fe-S) centers, to quinones in the respiratory and/or the photosynthetic chain. The immediate electron acceptor for the enzyme in this species is believed to be plastoquinone. Couples the redox reaction to proton translocation, and thus conserves the redox energy in a proton gradient. Cyanobacterial NDH-1 also plays a role in inorganic carbon-concentration. In Crocosphaera subtropica (strain ATCC 51142 / BH68) (Cyanothece sp. (strain ATCC 51142)), this protein is NAD(P)H-quinone oxidoreductase subunit O.